A 159-amino-acid chain; its full sequence is Ribosomal RNA large subunit methyltransferase H (159 aa).

An S-adenosyl-L-methionine-binding site is contributed by G108.

The protein belongs to the RNA methyltransferase RlmH family. Homodimer.

It is found in the cytoplasm. The catalysed reaction is pseudouridine(1915) in 23S rRNA + S-adenosyl-L-methionine = N(3)-methylpseudouridine(1915) in 23S rRNA + S-adenosyl-L-homocysteine + H(+). In terms of biological role, specifically methylates the pseudouridine at position 1915 (m3Psi1915) in 23S rRNA. In Lactobacillus gasseri (strain ATCC 33323 / DSM 20243 / BCRC 14619 / CIP 102991 / JCM 1131 / KCTC 3163 / NCIMB 11718 / NCTC 13722 / AM63), this protein is Ribosomal RNA large subunit methyltransferase H.